A 326-amino-acid chain; its full sequence is MNVVKYIIFSFALAPLLLVNANTYNFTQIQKRSVNQAVLESSQDTNSVGGEASSTACPLFTTIYTNGITPGTTTIYPTSISTSGVSSNNIDETSVSSESIITSTITTTITSGSQLYTTTITGQNTPVDTVEVVIPTAGTFTTTLTSGSSYPVATTTVRTASGTQSGEVEVITPSCGCSPENSFHLKIDNDKISPSYVYMDPNAPVRTNGAGREGNMFASTNGDNEGLNLFYYDSTIQRVLTCDCQRPSYTVYIEDPIIGNGFSSAWNLIKNSDGIFTPVESRNNEPLHFHVDNNGRVWMTSQEYDTEVSSTDERNFRANDVTLQLY.

A signal peptide spans 1–21 (MNVVKYIIFSFALAPLLLVNA). Residue asparagine 25 is glycosylated (N-linked (GlcNAc...) asparagine). A run of 2 repeats spans residues 103 to 137 (STIT…IPTA) and 138 to 175 (GTFT…TPSC). The interval 103–175 (STITTTITSG…GEVEVITPSC (73 aa)) is 2 X 36 AA approximate tandem repeats. The 163-residue stretch at 164 to 326 (QSGEVEVITP…RANDVTLQLY (163 aa)) folds into the DIPSY domain.

The protein belongs to the mam3/map4 family.

It is found in the cell surface. May be involved in agglutination during conjugation or other aspects of colony formation. Induces flocculation when overexpressed. The protein is Putative cell agglutination protein pfl9 of Schizosaccharomyces pombe (strain 972 / ATCC 24843) (Fission yeast).